Consider the following 574-residue polypeptide: Desiccation/radiation resistance protein DR_1769 (574 aa).

The N-terminal stretch at 1–33 (MPDPAARRFSLPPFPLAALALSVALLGAPASLA) is a signal peptide. Residues 400-438 (TAQTQARQAAAAASTSQQPRLPTLAQAPAPTPAPAQTTP) show a composition bias toward low complexity. The tract at residues 400-461 (TAQTQARQAA…APVPPVASPA (62 aa)) is disordered. Pro residues predominate over residues 439–459 (RPQPTPAQPATPAAPVPPVAS).

In terms of biological role, plays an important role in resistance to desiccation and radiation, maybe by protecting genome integrity under extreme conditions. In Deinococcus radiodurans (strain ATCC 13939 / DSM 20539 / JCM 16871 / CCUG 27074 / LMG 4051 / NBRC 15346 / NCIMB 9279 / VKM B-1422 / R1), this protein is Desiccation/radiation resistance protein DR_1769.